The primary structure comprises 359 residues: DNA polymerase IV (359 aa).

The 182-residue stretch at 4-185 (IIHIDMDCYF…LSLRKIPGVG (182 aa)) folds into the UmuC domain. Mg(2+)-binding residues include Asp8 and Asp103. Glu104 is a catalytic residue.

This sequence belongs to the DNA polymerase type-Y family. As to quaternary structure, monomer. It depends on Mg(2+) as a cofactor.

It is found in the cytoplasm. It carries out the reaction DNA(n) + a 2'-deoxyribonucleoside 5'-triphosphate = DNA(n+1) + diphosphate. In terms of biological role, poorly processive, error-prone DNA polymerase involved in untargeted mutagenesis. Copies undamaged DNA at stalled replication forks, which arise in vivo from mismatched or misaligned primer ends. These misaligned primers can be extended by PolIV. Exhibits no 3'-5' exonuclease (proofreading) activity. May be involved in translesional synthesis, in conjunction with the beta clamp from PolIII. This is DNA polymerase IV from Shewanella sp. (strain MR-7).